A 290-amino-acid polypeptide reads, in one-letter code: L-cysteine S-thiosulfotransferase subunit SoxA (290 aa).

Residues 1-26 (MPRFTKTKGTLAATALGLALAGAAFA) form the signal peptide. Zn(2+) is bound by residues aspartate 78 and aspartate 81. One can recognise a Cytochrome c domain in the interval 78–171 (DDFDNPAMVF…DMLSLISLQS (94 aa)). Positions 106, 109, 110, and 143 each coordinate heme c. Position 190 (histidine 190) interacts with Zn(2+). 3 residues coordinate heme c: cysteine 206, cysteine 209, and histidine 210. Residue arginine 247 coordinates substrate. Cysteine 251 contacts heme c. Residue cysteine 251 is the Cysteine persulfide intermediate of the active site. Aspartate 266 provides a ligand contact to Zn(2+).

It belongs to the SoxA family. Heterodimer of SoxA and SoxX. Requires heme c as cofactor. The cofactor is Zn(2+). Post-translationally, cysteine persulfide at Cys-251.

It is found in the periplasm. The catalysed reaction is L-cysteinyl-[SoxY protein] + thiosulfate + 2 Fe(III)-[cytochrome c] = S-sulfosulfanyl-L-cysteinyl-[SoxY protein] + 2 Fe(II)-[cytochrome c] + 2 H(+). It carries out the reaction S-sulfanyl-L-cysteinyl-[SoxY protein] + thiosulfate + 2 Fe(III)-[cytochrome c] = S-(2-sulfodisulfanyl)-L-cysteinyl-[SoxY protein] + 2 Fe(II)-[cytochrome c] + 2 H(+). Functionally, C-type diheme cytochrome, which is part of the SoxAX cytochrome complex involved in sulfur oxidation. The SoxAX complex catalyzes the formation of a heterodisulfide bond between the conserved cysteine residue on a sulfur carrier SoxYZ complex subunit SoxY and thiosulfate or other inorganic sulfur substrates. This leads to the liberation of two electrons, which may be transferred from the SoxAX complex to another cytochrome c that then channels them into the respiratory electron transport chain. Some electrons may be used for reductive CO(2) fixation. This Paracoccus pantotrophus (Thiosphaera pantotropha) protein is L-cysteine S-thiosulfotransferase subunit SoxA.